Here is a 361-residue protein sequence, read N- to C-terminus: Peptide chain release factor 1 (361 aa).

Gln237 is modified (N5-methylglutamine). A compositionally biased stretch (basic and acidic residues) spans 286 to 296 (EKRRSAEESTR). The interval 286–305 (EKRRSAEESTRRNLVSSGDR) is disordered.

Belongs to the prokaryotic/mitochondrial release factor family. Post-translationally, methylated by PrmC. Methylation increases the termination efficiency of RF1.

It is found in the cytoplasm. Functionally, peptide chain release factor 1 directs the termination of translation in response to the peptide chain termination codons UAG and UAA. In Shewanella pealeana (strain ATCC 700345 / ANG-SQ1), this protein is Peptide chain release factor 1.